The chain runs to 423 residues: L-cysteine:1D-myo-inositol 2-amino-2-deoxy-alpha-D-glucopyranoside ligase (423 aa).

Position 45 (C45) interacts with Zn(2+). L-cysteinyl-5'-AMP contacts are provided by residues 45 to 48 (CGIT), T60, and 83 to 85 (NVT). Positions 47–57 (ITPYDATHIGH) match the 'HIGH' region motif. Residues 197–202 (DRGGDP) carry the 'ERGGDP' region motif. An L-cysteinyl-5'-AMP-binding site is contributed by W238. C242 provides a ligand contact to Zn(2+). 260–262 (GSD) contributes to the L-cysteinyl-5'-AMP binding site. Zn(2+) is bound at residue H267. L-cysteinyl-5'-AMP is bound at residue I294. A 'KMSKS' region motif is present at residues 300–304 (KMSKS).

Belongs to the class-I aminoacyl-tRNA synthetase family. MshC subfamily. Monomer. Zn(2+) serves as cofactor.

It catalyses the reaction 1D-myo-inositol 2-amino-2-deoxy-alpha-D-glucopyranoside + L-cysteine + ATP = 1D-myo-inositol 2-(L-cysteinylamino)-2-deoxy-alpha-D-glucopyranoside + AMP + diphosphate + H(+). Functionally, catalyzes the ATP-dependent condensation of GlcN-Ins and L-cysteine to form L-Cys-GlcN-Ins. In Jonesia denitrificans (strain ATCC 14870 / DSM 20603 / BCRC 15368 / CIP 55.134 / JCM 11481 / NBRC 15587 / NCTC 10816 / Prevot 55134) (Listeria denitrificans), this protein is L-cysteine:1D-myo-inositol 2-amino-2-deoxy-alpha-D-glucopyranoside ligase.